We begin with the raw amino-acid sequence, 375 residues long: Muconate cycloisomerase 1 (375 aa).

Lys171 (proton acceptor) is an active-site residue. Residues Asp200, Glu226, and Asp251 each coordinate Mn(2+). The Proton donor role is filled by Glu329.

This sequence belongs to the mandelate racemase/muconate lactonizing enzyme family. Homooctamer. It depends on Mn(2+) as a cofactor.

It carries out the reaction (S)-muconolactone = cis,cis-muconate + H(+). It functions in the pathway aromatic compound metabolism; beta-ketoadipate pathway; 5-oxo-4,5-dihydro-2-furylacetate from catechol: step 2/3. Catalyzes a syn cycloisomerization. This Pseudomonas putida (Arthrobacter siderocapsulatus) protein is Muconate cycloisomerase 1 (catB).